Here is a 230-residue protein sequence, read N- to C-terminus: uncharacterized protein (230 aa).

Residues serine 124 and histidine 158 each act as charge relay system in the active site.

It belongs to the peptidase S51 family.

This is an uncharacterized protein from Bacillus subtilis (strain 168).